The chain runs to 443 residues: Gasdermin-A2 (443 aa).

The segment at 1 to 249 (MSMFEDVTRA…QGSTVQMISG (249 aa)) is triggers pyroptosis. Residue 9 to 13 (RALAR) participates in a cardiolipin binding. The next 4 beta stranded transmembrane spans lie at 78–95 (NFSFKNMLDVRVEGDVEV), 99–120 (MKVKGTVGLSQSSTLEVQMLSV), 164–179 (VTLKRASNAISKFSLN), and 183–197 (LGLQGSVNHKEAVTI). A coiled-coil region spans residues 249-312 (GEMHEDFKTL…GALDKGHEVT (64 aa)).

The protein belongs to the gasdermin family. Homooligomer; homooligomeric ring-shaped pore complex containing 18-36 subunits when inserted in the membrane. Cleavage relieves autoinhibition by releasing the N-terminal moiety (Gasdermin-A2, N-terminal) that initiates pyroptosis. In contrast to Gsdma, not cleaved by bacterial effector protein SpeB. Post-translationally, palmitoylated. In terms of tissue distribution, expressed in the gastrointestinal tract, specifically from the middle to the upper region of the gastric mucosa in the glandular stomach.

Its subcellular location is the cytoplasm. The protein localises to the perinuclear region. It localises to the cytosol. The protein resides in the cell membrane. Its activity is regulated as follows. The full-length protein before cleavage is inactive: intramolecular interactions between N- and C-terminal domains mediate autoinhibition in the absence of activation signal. The intrinsic pyroptosis-inducing activity is carried by the released N-terminal moiety (Gasdermin-A2, N-terminal). Its function is as follows. This form constitutes the precursor of the pore-forming protein and acts as a sensor of infection: upon bacterial infection, specifically cleaved by some bacterial effector protein, releasing the N-terminal moiety (Gasdermin-A2, N-terminal) that binds to membranes and forms pores, triggering pyroptosis. Functionally, pore-forming protein that causes membrane permeabilization and pyroptosis. Released upon cleavage of Gasdermin-A2, and binds to membrane inner leaflet lipids. Homooligomerizes within the membrane and forms pores of 10-15 nanometers (nm) of inner diameter, triggering pyroptosis. Binds to membrane inner leaflet lipids, such as phosphatidylinositol (4,5)-bisphosphate. This is Gasdermin-A2 from Mus musculus (Mouse).